The following is a 209-amino-acid chain: Protein phosphotransferase ChpT (209 aa).

A Phosphohistidine modification is found at His-22.

Belongs to the ChpT phosphotransferase family. In terms of assembly, homodimer. Forms an asymmetric heterotetramer with CtrA (2:2). There are at least two modes of interaction between ChpT and CtrA, only one of which is competent to catalyze His-Asp phosphoryl transfer. Post-translationally, is phosphorylated by CckA-P on His-22.

It is found in the cytoplasm. Functionally, component of a regulatory phosphorelay system that controls B.abortus cell growth, division, and intracellular survival inside mammalian host cells. This signaling pathway is composed of CckA, ChpT, CtrA and CpdR. ChpT efficiently and specifically shuttles phosphoryl groups from the CckA kinase to the receiver domains of both CtrA and CpdR. Does not bind ATP. Overexpression of chpT results in a defect in cell morphology, DNA content, and intracellular survival in human macrophages. The protein is Protein phosphotransferase ChpT of Brucella abortus (strain 2308).